We begin with the raw amino-acid sequence, 2726 residues long: Filamin-C (2726 aa).

The interval 1–260 (MMNNSNYSDA…VMTYLSQFPK (260 aa)) is actin-binding. Ser5 carries the phosphoserine modification. Calponin-homology (CH) domains are found at residues 37 to 143 (KIQQ…LHYS) and 160 to 263 (QTPK…KAKL). Filamin repeat units follow at residues 271–369 (SKQL…EVNV), 371–469 (MALG…PVHV), 470–566 (AEAC…EVQV), 567–659 (SPEA…IAHI), 663–759 (PPDC…RVNV), 760–862 (GEGS…HIKV), 863–961 (DPSH…VVNV), 962–1057 (APPL…AVEG), 1058–1150 (VLPP…KATI), 1151–1245 (QPVF…RVHV), 1246–1345 (QPAV…RVGV), 1346–1438 (TEGC…RVPV), 1439–1534 (KDVV…KIKV), 1535–1631 (LPSH…RIHA), and 1636–1735 (DASK…HVLA). Arg1003 is subject to Omega-N-methylarginine. 2 positions are modified to phosphoserine: Ser1162 and Ser1339. Residues 1736–1759 (CDPLPHVEEPAEMLQMRQPYAPLR) form a hinge 1 region. Filamin repeat units follow at residues 1760-1855 (PGTC…QFYV), 1856-1947 (DAIN…TAKI), 1948-2034 (TGDD…KILV), and 2037-2129 (SEIG…TVKV). Ser2043 is modified (phosphoserine). Residues 2163-2244 (GNWFQMVSAQ…FGSITRQQEG (82 aa)) are intradomain insert; mediate targeting to Z lines. Residues 2193–2210 (EISKTRGGETKREVRVEE) are compositionally biased toward basic and acidic residues. Residues 2193–2214 (EISKTRGGETKREVRVEESTQV) are disordered. The Filamin 20; mediates interaction with XIRP1 repeat unit spans residues 2212–2307 (TQVGGDPFPA…VPGSPFQFTV (96 aa)). A phosphoserine mark is found at Ser2234 and Ser2237. Residue Thr2239 is modified to Phosphothreonine. Residues 2241-2260 (QQEGEASSQDMTAQVTSPSG) are compositionally biased toward polar residues. A disordered region spans residues 2241–2261 (QQEGEASSQDMTAQVTSPSGK). 3 Filamin repeats span residues 2310–2402 (LGEG…VVPV), 2404–2497 (SLSD…KIRV), and 2501–2593 (SQAG…KAKV). The interval 2404 to 2725 (SLSDDARRLT…VPGSPFKVNV (322 aa)) is interaction with INPPL1. 6 positions are modified to phosphoserine: Ser2587, Ser2618, Ser2621, Ser2633, Ser2715, and Ser2719. The interval 2594-2630 (TGPRLSGGHSLHETSTVLVETVTKSSSSRGASYSSIP) is hinge 2. Residues 2594-2726 (TGPRLSGGHS…PGSPFKVNVP (133 aa)) form a self-association site, tail region. Residues 2631-2725 (KFSSDASKVV…VPGSPFKVNV (95 aa)) form a Filamin 24 repeat.

Belongs to the filamin family. In terms of assembly, homodimer; the filamin repeat 24 and the second hinge domain are important for dimer formation. Interacts with FLNB, INPPL1, ITGB1A, KCND2, MYOT, MYOZ1 and MYOZ3. Interacts with sarcoglycans SGCD and SGCG. Interacts (via filament repeats 17-18, 20-21 and 24) with USP25 (isoform USP25m only). Interacts with FBLIM1. Interacts with XIRP1; this interaction is mediated by filamin 20 repeat. Interacts with KY. Interacts with IGFN1. Interacts with MICALL2. Interacts with ANK3. Interacts with MICALL2. Interacts with ANK3. Interacts with SYNPO2. Ubiquitinated by FBXL22, leading to proteasomal degradation.

Its subcellular location is the cytoplasm. The protein localises to the membrane. It localises to the cytoskeleton. The protein resides in the myofibril. It is found in the sarcomere. Its subcellular location is the z line. In terms of biological role, muscle-specific filamin, which plays a central role in sarcomere assembly and organization. Critical for normal myogenesis, it probably functions as a large actin-cross-linking protein with structural functions at the Z lines in muscle cells. May be involved in reorganizing the actin cytoskeleton in response to signaling events. In Mus musculus (Mouse), this protein is Filamin-C (Flnc).